A 762-amino-acid chain; its full sequence is N,N-dimethylformamidase beta subunit (762 aa).

As to quaternary structure, heterotetramer of two DmfA1 (alpha) and two DmfA2 (beta) subunits.

It catalyses the reaction N,N-dimethylformamide + H2O = dimethylamine + formate. Activity is slightly inhibited by Mg(2+) and Mn(2+), and slightly increased by Cu(2+). Activity is slightly inhibited by the chelating agents 8-hydroxyquinoline, ethylenediaminetetraacetate, o-phenanthroline and 2,2'-bipyridyl. In terms of biological role, hydrolyzes N,N-dimethylformamide, and to a lesser extent N,N-dimethylacetamide and N,N-diethylacetamide. Has no activity against the substituted amides N-methylformamide, N-ethylformamide, N-ethylformamide and N-methylacetamide or the unsubstituted amides formamide, nicotinamide, acetoamide, benzamide, acetamide and acrylamide. This Alcaligenes sp protein is N,N-dimethylformamidase beta subunit.